Reading from the N-terminus, the 403-residue chain is Dual-specificity RNA methyltransferase RlmN (403 aa).

Glu-126 functions as the Proton acceptor in the catalytic mechanism. The Radical SAM core domain occupies 132 to 375 (ETDRGTLCVS…VRTPRGRDIL (244 aa)). A disulfide bridge connects residues Cys-139 and Cys-378. [4Fe-4S] cluster-binding residues include Cys-146, Cys-150, and Cys-153. S-adenosyl-L-methionine-binding positions include 204–205 (GE), Ser-236, 258–260 (SLH), and Asn-335. Residue Cys-378 is the S-methylcysteine intermediate of the active site.

It belongs to the radical SAM superfamily. RlmN family. [4Fe-4S] cluster serves as cofactor.

The protein resides in the cytoplasm. It catalyses the reaction adenosine(2503) in 23S rRNA + 2 reduced [2Fe-2S]-[ferredoxin] + 2 S-adenosyl-L-methionine = 2-methyladenosine(2503) in 23S rRNA + 5'-deoxyadenosine + L-methionine + 2 oxidized [2Fe-2S]-[ferredoxin] + S-adenosyl-L-homocysteine. It carries out the reaction adenosine(37) in tRNA + 2 reduced [2Fe-2S]-[ferredoxin] + 2 S-adenosyl-L-methionine = 2-methyladenosine(37) in tRNA + 5'-deoxyadenosine + L-methionine + 2 oxidized [2Fe-2S]-[ferredoxin] + S-adenosyl-L-homocysteine. Functionally, specifically methylates position 2 of adenine 2503 in 23S rRNA and position 2 of adenine 37 in tRNAs. m2A2503 modification seems to play a crucial role in the proofreading step occurring at the peptidyl transferase center and thus would serve to optimize ribosomal fidelity. The sequence is that of Dual-specificity RNA methyltransferase RlmN from Bradyrhizobium sp. (strain BTAi1 / ATCC BAA-1182).